We begin with the raw amino-acid sequence, 1159 residues long: MSDPKFIHLRIHSDFSMVDGLSKVPPLVKKVAAMGMPAMALTDFTNLCGLVKFYSTAHNCGVKPIIGADFTLQSEEFGDELTKLTLLAKNNVGYKNLTLLISKAYLRGHVQHQPVIDKAWLVEHAEGLIVLSGGKSGEVGRALLKGNQQQVERCIEFYQTHFADHFYLELIRTGRADEESYLHFALDVAEQYDLPVVATNEVVFITEESFEAHEIRVAIHDGYTLEDPRRPKNYSPKQYLRSEAEMCELFADIPEALANSVEIAKRCNVTVRLGEYFLPNFPTGGMAIEDFLVMKSREGLEERLEFLFPDPEVRAKRRPEYDERLQVELDVINQMGFPGYFLIVMEFIQWSKDNDIPVGPGRGSGAGSLVAYALKITDLDPLEYDLLFERFLNPERVSMPDFDVDFCMDKRDQVIDHVAEMYGRDAVSQIITFGTMAAKAVIRDVGRVLGHPFGFVDRISKLVPPDPGMTLEKAFIAEPALQELYDADEEVKELIDKCRILEGCTRNAGKHAGGVVISPTAITDFAPIYCDAEGNFPVTQFDKNDVETAGLVKFDFLGLRTLTIIDWALGLVNPRLKKAGKPPVRIEAIPLDDARSFRNLQDAKTTAVFQLESRGMKELIKRLQPDCFEDIIALVALFRPGPLQSGMVDNFIDRKHGREAISYPDEKWQHESLKEILEPTYGIILYQEQVMQIAQVLSGYTLGGADMLRRAMGKKKPEEMAKQRAVFQEGAEKNGVDGELAMKIFDLVEKFAGYGFNKSHSAAYALVSYQTLWLKTHYPAEFMAAVMTADMDNTEKVVGLVDECKNMGLTVLPPDINSGLYRFNVDDNGAIVYGIGAIKGVGEGPIEAILEARNKGGYFKDLFDFCARIDLKKVNKRVIEKLILAGALDRLGPHRAAMMASVDDAVRAASQHHQAEAFGQADMFGVLTDAPEEVEQKYTQVPEWPEKVRLEGERETLGLYLTGHPVDEYLKELTKYTSCRLNEAAPTRRDQSLTVAGLVIAARVMTTKRGTRIGLMTLDDRSGRMEVMLYSEALDRYAEWLEKDKILVVSGQVSFDDFNGGLKMSAREVMDLGSAREKFARGLSISILQSQIDQQFFERFSHILEPHRAGTVPVNVYYQRPDARARLTLGTEWRVTPSDTLLDELKQLLGHDQVELEFN.

The protein belongs to the DNA polymerase type-C family. DnaE subfamily. As to quaternary structure, DNA polymerase III contains a core (composed of alpha, epsilon and theta chains) that associates with a tau subunit. This core dimerizes to form the PolIII' complex. PolIII' associates with the gamma complex (composed of gamma, delta, delta', psi and chi chains) and with the beta chain to form the complete DNA polymerase III complex.

It localises to the cytoplasm. It catalyses the reaction DNA(n) + a 2'-deoxyribonucleoside 5'-triphosphate = DNA(n+1) + diphosphate. Functionally, DNA polymerase III is a complex, multichain enzyme responsible for most of the replicative synthesis in bacteria. This DNA polymerase also exhibits 3' to 5' exonuclease activity. The alpha chain is the DNA polymerase. The chain is DNA polymerase III subunit alpha (dnaE) from Vibrio cholerae serotype O1 (strain ATCC 39315 / El Tor Inaba N16961).